The following is a 502-amino-acid chain: UDP-N-acetylmuramoylalanine--D-glutamate ligase (502 aa).

Gly-129–Thr-135 contacts ATP. Residues Ala-288–Ile-307 are disordered.

Belongs to the MurCDEF family.

The protein resides in the cytoplasm. The enzyme catalyses UDP-N-acetyl-alpha-D-muramoyl-L-alanine + D-glutamate + ATP = UDP-N-acetyl-alpha-D-muramoyl-L-alanyl-D-glutamate + ADP + phosphate + H(+). The protein operates within cell wall biogenesis; peptidoglycan biosynthesis. Functionally, cell wall formation. Catalyzes the addition of glutamate to the nucleotide precursor UDP-N-acetylmuramoyl-L-alanine (UMA). In Burkholderia ambifaria (strain ATCC BAA-244 / DSM 16087 / CCUG 44356 / LMG 19182 / AMMD) (Burkholderia cepacia (strain AMMD)), this protein is UDP-N-acetylmuramoylalanine--D-glutamate ligase.